A 364-amino-acid polypeptide reads, in one-letter code: Fructose-bisphosphate aldolase B (364 aa).

The residue at position 2 (alanine 2) is an N-acetylalanine. Lysine 13 is modified (N6-succinyllysine). Phosphoserine is present on serine 36. Phosphothreonine is present on threonine 39. Arginine 43 contributes to the beta-D-fructose 1,6-bisphosphate binding site. Threonine 119 bears the Phosphothreonine mark. Residue lysine 121 is modified to N6-succinyllysine. Phosphoserine is present on serine 132. Residue glutamate 188 is the Proton acceptor of the active site. Lysine 230 serves as the catalytic Schiff-base intermediate with dihydroxyacetone-P. A phosphoserine mark is found at serine 272, serine 276, serine 299, and serine 301. A beta-D-fructose 1,6-bisphosphate-binding site is contributed by 272–274; it reads SGG. Position 304 (arginine 304) interacts with beta-D-fructose 1,6-bisphosphate. Serine 309 is subject to Phosphoserine. An N6-succinyllysine modification is found at lysine 317.

Belongs to the class I fructose-bisphosphate aldolase family. As to quaternary structure, homotetramer. Interacts with BBS1, BBS2, BBS4 and BBS7. Forms a ternary complex with G6PD and TP53; this interaction is direct.

Its subcellular location is the cytoplasm. The protein resides in the cytosol. It localises to the cytoskeleton. It is found in the microtubule organizing center. The protein localises to the centrosome. Its subcellular location is the centriolar satellite. It carries out the reaction beta-D-fructose 1,6-bisphosphate = D-glyceraldehyde 3-phosphate + dihydroxyacetone phosphate. The catalysed reaction is beta-D-fructose 1-phosphate = D-glyceraldehyde + dihydroxyacetone phosphate. It participates in carbohydrate degradation; glycolysis; D-glyceraldehyde 3-phosphate and glycerone phosphate from D-glucose: step 4/4. It functions in the pathway carbohydrate biosynthesis; gluconeogenesis. The protein operates within carbohydrate metabolism; fructose metabolism. In terms of biological role, catalyzes the aldol cleavage of fructose 1,6-biphosphate to form two triosephosphates dihydroxyacetone phosphate and D-glyceraldehyde 3-phosphate in glycolysis as well as the reverse stereospecific aldol addition reaction in gluconeogenesis. In fructolysis, metabolizes fructose 1-phosphate derived from the phosphorylation of dietary fructose by fructokinase into dihydroxyacetone phosphate and D-glyceraldehyde. Acts as an adapter independently of its enzymatic activity, exerts a tumor suppressor role by stabilizing the ternary complex with G6PD and TP53 to inhibit G6PD activity and keep oxidative pentose phosphate metabolism in check. The chain is Fructose-bisphosphate aldolase B (ALDOB) from Ovis aries (Sheep).